Consider the following 142-residue polypeptide: Hemoglobin subunit alpha-1 (142 aa).

The residue at position 1 (S1) is an N-acetylserine. The Globin domain maps to 1–142 (SLSVKDKAAV…VALALAERYR (142 aa)). H59 contacts O2. H88 serves as a coordination point for heme b.

It belongs to the globin family. As to quaternary structure, hb 1 is a heterotetramer of two alpha-1 and two beta-1 chains. Red blood cells.

Its function is as follows. Involved in oxygen transport from gills to the various peripheral tissues. This Gobionotothen gibberifrons (Humped rockcod) protein is Hemoglobin subunit alpha-1 (hba1).